The sequence spans 242 residues: Venom nerve growth factor 1 (242 aa).

A signal peptide spans 1 to 18; that stretch reads MSMLCYTLIIAFLIGIWA. Positions 19–125 are excised as a propeptide; the sequence is APKSEDNVPL…ALNRNIRSKR (107 aa). The interval 26-69 is disordered; it reads VPLGSPATSDLSDTSCAQTHKALKTSRNTDQRHPAPKKAEDQEL. The span at 31–43 shows a compositional bias: polar residues; the sequence is PATSDLSDTSCAQ. Residues 52-66 show a composition bias toward basic and acidic residues; it reads RNTDQRHPAPKKAED. Disulfide bonds link Cys139–Cys203, Cys181–Cys231, and Cys191–Cys233. The N-linked (GlcNAc...) asparagine glycan is linked to Asn147.

It belongs to the NGF-beta family. As to quaternary structure, homodimer; non-covalently linked. In terms of tissue distribution, expressed by the venom gland.

Its subcellular location is the secreted. Functionally, nerve growth factor is important for the development and maintenance of the sympathetic and sensory nervous systems. It stimulates division and differentiation of sympathetic and embryonic sensory neurons as well as basal forebrain cholinergic neurons in the brain. Its relevance in the snake venom is not clear. However, it has been shown to inhibit metalloproteinase-dependent proteolysis of platelet glycoprotein Ib alpha, suggesting a metalloproteinase inhibition to prevent metalloprotease autodigestion and/or protection against prey proteases. Binds a lipid between the two protein chains in the homodimer. The lipid-bound form promotes histamine relase from mouse mast cells, contrary to the lipid-free form. In Demansia vestigiata (Lesser black whip snake), this protein is Venom nerve growth factor 1.